Consider the following 684-residue polypeptide: Methionine--tRNA ligase (684 aa).

Residues 14-24 (PYANGAIHLGH) carry the 'HIGH' region motif. Zn(2+) is bound by residues C145, C148, C158, and C161. The short motif at 330–334 (KMSKS) is the 'KMSKS' region element. Residue K333 participates in ATP binding. One can recognise a tRNA-binding domain in the interval 582–684 (DFAKLDLRVA…CGIRPGMQVK (103 aa)).

Belongs to the class-I aminoacyl-tRNA synthetase family. MetG type 1 subfamily. As to quaternary structure, homodimer. It depends on Zn(2+) as a cofactor.

The protein resides in the cytoplasm. It carries out the reaction tRNA(Met) + L-methionine + ATP = L-methionyl-tRNA(Met) + AMP + diphosphate. Functionally, is required not only for elongation of protein synthesis but also for the initiation of all mRNA translation through initiator tRNA(fMet) aminoacylation. This chain is Methionine--tRNA ligase, found in Haemophilus ducreyi (strain 35000HP / ATCC 700724).